A 523-amino-acid chain; its full sequence is 2-isopropylmalate synthase (523 aa).

In terms of domain architecture, Pyruvate carboxyltransferase spans 5–267; that stretch reads VIIFDTTLRD…HTNINHHEIW (263 aa). Mn(2+) is bound by residues Asp14, His202, His204, and Asn238. The segment at 392–523 is regulatory domain; it reads RLDYFSVQSG…QNKENNKETV (132 aa).

Belongs to the alpha-IPM synthase/homocitrate synthase family. LeuA type 1 subfamily. In terms of assembly, homodimer. Mn(2+) is required as a cofactor.

It localises to the cytoplasm. It carries out the reaction 3-methyl-2-oxobutanoate + acetyl-CoA + H2O = (2S)-2-isopropylmalate + CoA + H(+). It functions in the pathway amino-acid biosynthesis; L-leucine biosynthesis; L-leucine from 3-methyl-2-oxobutanoate: step 1/4. Functionally, catalyzes the condensation of the acetyl group of acetyl-CoA with 3-methyl-2-oxobutanoate (2-ketoisovalerate) to form 3-carboxy-3-hydroxy-4-methylpentanoate (2-isopropylmalate). The polypeptide is 2-isopropylmalate synthase (Salmonella paratyphi A (strain ATCC 9150 / SARB42)).